The sequence spans 535 residues: CTP synthase (535 aa).

Positions 1-267 are amidoligase domain; that stretch reads MTKYIFVTGG…DKLVCDHMKL (267 aa). Ser13 is a CTP binding site. Ser13 lines the UTP pocket. 14 to 19 lines the ATP pocket; sequence SLGKGI. An L-glutamine-binding site is contributed by Tyr54. Asp71 is an ATP binding site. Mg(2+)-binding residues include Asp71 and Glu141. CTP is bound by residues 148–150, 188–193, and Lys224; these read DIE and KTKPTQ. Residues 188–193 and Lys224 each bind UTP; that span reads KTKPTQ. The region spanning 292–534 is the Glutamine amidotransferase type-1 domain; it reads TISLVGKYVE…IGASVQAAEQ (243 aa). Gly354 serves as a coordination point for L-glutamine. Cys381 serves as the catalytic Nucleophile; for glutamine hydrolysis. L-glutamine is bound by residues 382–385, Glu405, and Arg462; that span reads LGMQ. Catalysis depends on residues His507 and Glu509.

This sequence belongs to the CTP synthase family. As to quaternary structure, homotetramer.

The catalysed reaction is UTP + L-glutamine + ATP + H2O = CTP + L-glutamate + ADP + phosphate + 2 H(+). The enzyme catalyses L-glutamine + H2O = L-glutamate + NH4(+). It carries out the reaction UTP + NH4(+) + ATP = CTP + ADP + phosphate + 2 H(+). It functions in the pathway pyrimidine metabolism; CTP biosynthesis via de novo pathway; CTP from UDP: step 2/2. Its activity is regulated as follows. Allosterically activated by GTP, when glutamine is the substrate; GTP has no effect on the reaction when ammonia is the substrate. The allosteric effector GTP functions by stabilizing the protein conformation that binds the tetrahedral intermediate(s) formed during glutamine hydrolysis. Inhibited by the product CTP, via allosteric rather than competitive inhibition. Catalyzes the ATP-dependent amination of UTP to CTP with either L-glutamine or ammonia as the source of nitrogen. Regulates intracellular CTP levels through interactions with the four ribonucleotide triphosphates. This chain is CTP synthase, found in Bacillus velezensis (strain DSM 23117 / BGSC 10A6 / LMG 26770 / FZB42) (Bacillus amyloliquefaciens subsp. plantarum).